The primary structure comprises 232 residues: Octanoyltransferase (232 aa).

The BPL/LPL catalytic domain occupies 32–219; it reads NIIYDTLILL…SFKVFNFSSY (188 aa). Residues 77-84, 140-142, and 153-155 each bind substrate; these read RGGDITYH, AIG, and GFA. Residue C171 is the Acyl-thioester intermediate of the active site.

This sequence belongs to the LipB family.

The protein resides in the cytoplasm. It carries out the reaction octanoyl-[ACP] + L-lysyl-[protein] = N(6)-octanoyl-L-lysyl-[protein] + holo-[ACP] + H(+). The protein operates within protein modification; protein lipoylation via endogenous pathway; protein N(6)-(lipoyl)lysine from octanoyl-[acyl-carrier-protein]: step 1/2. Functionally, catalyzes the transfer of endogenously produced octanoic acid from octanoyl-acyl-carrier-protein onto the lipoyl domains of lipoate-dependent enzymes. Lipoyl-ACP can also act as a substrate although octanoyl-ACP is likely to be the physiological substrate. The sequence is that of Octanoyltransferase from Dictyoglomus turgidum (strain DSM 6724 / Z-1310).